Reading from the N-terminus, the 70-residue chain is ATP synthase subunit c (70 aa).

Transmembrane regions (helical) follow at residues 5 to 25 and 47 to 67; these read AAGI…AIIV and FIGV…SFIL.

The protein belongs to the ATPase C chain family. F-type ATPases have 2 components, F(1) - the catalytic core - and F(0) - the membrane proton channel. F(1) has five subunits: alpha(3), beta(3), gamma(1), delta(1), epsilon(1). F(0) has three main subunits: a(1), b(2) and c(10-14). The alpha and beta chains form an alternating ring which encloses part of the gamma chain. F(1) is attached to F(0) by a central stalk formed by the gamma and epsilon chains, while a peripheral stalk is formed by the delta and b chains.

It is found in the cell membrane. In terms of biological role, f(1)F(0) ATP synthase produces ATP from ADP in the presence of a proton or sodium gradient. F-type ATPases consist of two structural domains, F(1) containing the extramembraneous catalytic core and F(0) containing the membrane proton channel, linked together by a central stalk and a peripheral stalk. During catalysis, ATP synthesis in the catalytic domain of F(1) is coupled via a rotary mechanism of the central stalk subunits to proton translocation. Functionally, key component of the F(0) channel; it plays a direct role in translocation across the membrane. A homomeric c-ring of between 10-14 subunits forms the central stalk rotor element with the F(1) delta and epsilon subunits. This is ATP synthase subunit c from Halalkalibacterium halodurans (strain ATCC BAA-125 / DSM 18197 / FERM 7344 / JCM 9153 / C-125) (Bacillus halodurans).